A 278-amino-acid polypeptide reads, in one-letter code: Probable ribosomal RNA small subunit methyltransferase A (278 aa).

S-adenosyl-L-methionine contacts are provided by H25, M27, G52, E73, D98, and N114.

Belongs to the class I-like SAM-binding methyltransferase superfamily. rRNA adenine N(6)-methyltransferase family. RsmA subfamily.

The protein resides in the cytoplasm. Specifically dimethylates two adjacent adenosines in the loop of a conserved hairpin near the 3'-end of 16S rRNA in the 30S particle. May play a critical role in biogenesis of 30S subunits. In Methanopyrus kandleri (strain AV19 / DSM 6324 / JCM 9639 / NBRC 100938), this protein is Probable ribosomal RNA small subunit methyltransferase A.